The chain runs to 842 residues: Taste receptor type 1 member 1 (842 aa).

An N-terminal signal peptide occupies residues 1–19; sequence MLFWAAHLLLSLQLAVAYC. The Extracellular portion of the chain corresponds to 20–568; the sequence is WAFSCQRTES…EFLGWHEPIS (549 aa). Residues Asn-88, Asn-89, Asn-96, Asn-136, Asn-292, Asn-480, and Asn-530 are each glycosylated (N-linked (GlcNAc...) asparagine). Residues 569–589 form a helical membrane-spanning segment; that stretch reads LVLLAANTLLLLLLIGTAGLF. Topologically, residues 590–604 are cytoplasmic; that stretch reads AWRLHTPVVRSAGGR. Residues 605-625 traverse the membrane as a helical segment; that stretch reads LCFLMLGSLVAGSCSLYSFFG. The Extracellular portion of the chain corresponds to 626 to 640; the sequence is KPTVPACLLRQPLFS. Residues 641 to 661 traverse the membrane as a helical segment; sequence LGFAIFLSCLTIRSFQLVIIF. Residues 662 to 681 lie on the Cytoplasmic side of the membrane; sequence KFSTKVPTFYHTWAQNHGAG. A helical membrane pass occupies residues 682-702; the sequence is IFVIVSSTVHLFLCLTWLAMW. Residues 703-725 lie on the Extracellular side of the membrane; sequence TPRPTREYQRFPHLVILECTEVN. The chain crosses the membrane as a helical span at residues 726–746; it reads SVGFLVAFAHNILLSISTFVC. Residues 747–762 are Cytoplasmic-facing; sequence SYLGKELPENYNEAKC. Residues 763–783 form a helical membrane-spanning segment; the sequence is VTFSLLLHFVSWIAFFTMSSI. At 784 to 789 the chain is on the extracellular side; sequence YQGSYL. A helical transmembrane segment spans residues 790–810; the sequence is PAVNVLAGLATLSGGFSGYFL. The Cytoplasmic portion of the chain corresponds to 811 to 842; sequence PKCYVILCRPELNNTEHFQASIQDYTRRCGTT.

Belongs to the G-protein coupled receptor 3 family. TAS1R subfamily. In terms of assembly, forms heterodimers with TAS1R3. As to expression, expressed strongly only in fungiform papillae.

The protein resides in the cell membrane. Its function is as follows. Putative taste receptor. TAS1R1/TAS1R3 responds to the umami taste stimulus (the taste of monosodium glutamate) and also to most of the 20 standard L-amino acids, but not to their D-enantiomers or other compounds. Sequence differences within and between species can significantly influence the selectivity and specificity of taste responses. This Mus musculus (Mouse) protein is Taste receptor type 1 member 1 (Tas1r1).